The following is a 325-amino-acid chain: Heat-inducible transcription repressor HrcA (325 aa).

It belongs to the HrcA family.

Its function is as follows. Negative regulator of class I heat shock genes (grpE-dnaK-dnaJ and groELS operons). Prevents heat-shock induction of these operons. The chain is Heat-inducible transcription repressor HrcA from Staphylococcus aureus (strain USA300).